We begin with the raw amino-acid sequence, 295 residues long: Probable adenylate kinase 6, chloroplastic (295 aa).

The transit peptide at 1-46 (MAVSHRLLRPATTTIKNTFSSLFIRSLSSSSSGSSLDPKIDLEEAA) directs the protein to the chloroplast. 74-79 (GVGKGT) provides a ligand contact to ATP. The tract at residues 94 to 123 (ATGDLVREELSSSGLLSSQLKELVNHGKLV) is NMP. AMP-binding positions include Thr-95, Arg-100, 121–123 (KLV), 151–154 (GFPR), and Gln-158. The LID stretch occupies residues 187-235 (GRRICSECGGNYNVACIDIKGDDDTPRMYMPPLLPPPNCESKLISRADD). Arg-188 serves as a coordination point for ATP. Arg-243 is an AMP binding site. An ATP-binding site is contributed by Gly-271.

It belongs to the adenylate kinase family. In terms of assembly, monomer.

The protein localises to the plastid. The protein resides in the chloroplast. The catalysed reaction is AMP + ATP = 2 ADP. Catalyzes the reversible transfer of the terminal phosphate group between ATP and AMP. Plays an important role in cellular energy homeostasis and in adenine nucleotide metabolism. The polypeptide is Probable adenylate kinase 6, chloroplastic (Arabidopsis thaliana (Mouse-ear cress)).